Here is a 101-residue protein sequence, read N- to C-terminus: NAD(P)H-quinone oxidoreductase subunit 4L, chloroplastic (101 aa).

3 helical membrane passes run 2-22 (LLEH…YGLI), 32-52 (MCLE…SDFF), and 61-81 (IFSI…SAIV).

This sequence belongs to the complex I subunit 4L family. NDH is composed of at least 16 different subunits, 5 of which are encoded in the nucleus.

The protein localises to the plastid. It localises to the chloroplast thylakoid membrane. It carries out the reaction a plastoquinone + NADH + (n+1) H(+)(in) = a plastoquinol + NAD(+) + n H(+)(out). It catalyses the reaction a plastoquinone + NADPH + (n+1) H(+)(in) = a plastoquinol + NADP(+) + n H(+)(out). Its function is as follows. NDH shuttles electrons from NAD(P)H:plastoquinone, via FMN and iron-sulfur (Fe-S) centers, to quinones in the photosynthetic chain and possibly in a chloroplast respiratory chain. The immediate electron acceptor for the enzyme in this species is believed to be plastoquinone. Couples the redox reaction to proton translocation, and thus conserves the redox energy in a proton gradient. The chain is NAD(P)H-quinone oxidoreductase subunit 4L, chloroplastic from Carica papaya (Papaya).